A 435-amino-acid polypeptide reads, in one-letter code: Cytochrome c biogenesis protein Ccs1 (435 aa).

Helical transmembrane passes span 17–37 (LSLSISLLLLIASISIIGTII), 77–97 (NPCFVLVLVLFFCSLLACTFS), and 163–183 (IAPIVVHFSIILTFIGSLISL).

It belongs to the Ccs1/CcsB family. In terms of assembly, may interact with CcsA.

Its subcellular location is the plastid. It is found in the chloroplast thylakoid membrane. Required during biogenesis of c-type cytochromes (cytochrome c6 and cytochrome f) at the step of heme attachment. The polypeptide is Cytochrome c biogenesis protein Ccs1 (Gracilaria tenuistipitata var. liui (Red alga)).